We begin with the raw amino-acid sequence, 398 residues long: Aurofusarin biosynthesis regulatory protein aurR1 (398 aa).

The segment at residues 18–45 (CDNCAKSKVRCGKEQPWCQRCERRGQVC) is a DNA-binding region (zn(2)-C6 fungal-type). Disordered regions lie at residues 52–73 (RSRK…GTPP) and 275–314 (AATI…SSLI). Composition is skewed to basic and acidic residues over residues 56 to 67 (RTLDAAHPESDQ) and 289 to 298 (DGKDTERSVS). The segment covering 299–311 (RDTNVSQDGSEPS) has biased composition (polar residues).

It localises to the nucleus. Transcription factor that specifically regulates the expression of the gene cluster that mediates the biosynthesis of aurofusarin, a red mycelium pigment which is acting as a mycotoxin. This is Aurofusarin biosynthesis regulatory protein aurR1 from Gibberella zeae (strain ATCC MYA-4620 / CBS 123657 / FGSC 9075 / NRRL 31084 / PH-1) (Wheat head blight fungus).